The following is a 378-amino-acid chain: B3 domain-containing protein Os03g0622200 (378 aa).

Residues 29 to 124 (SKHFLKHMVG…SFDVLIFDPS (96 aa)) constitute a DNA-binding region (TF-B3 1). Positions 140–159 (GRAENSAGAEQGGRNGRRTP) are disordered. The segment at residues 256–370 (FVQVIHSSHV…TMTVHVLRRV (115 aa)) is a DNA-binding region (TF-B3 2).

It localises to the nucleus. The chain is B3 domain-containing protein Os03g0622200 from Oryza sativa subsp. japonica (Rice).